The sequence spans 372 residues: Alanine dehydrogenase 2 (372 aa).

H95 is a catalytic residue. K169–N199 is a binding site for NAD(+).

Belongs to the AlaDH/PNT family.

It carries out the reaction L-alanine + NAD(+) + H2O = pyruvate + NH4(+) + NADH + H(+). It functions in the pathway amino-acid degradation; L-alanine degradation via dehydrogenase pathway; NH(3) and pyruvate from L-alanine: step 1/1. Its function is as follows. May play a role in cell wall synthesis as L-alanine is an important constituent of the peptidoglycan layer. The protein is Alanine dehydrogenase 2 (ald2) of Staphylococcus aureus (strain Mu50 / ATCC 700699).